A 20-amino-acid polypeptide reads, in one-letter code: Alpha-amylase (20 aa).

It carries out the reaction Endohydrolysis of (1-&gt;4)-alpha-D-glucosidic linkages in polysaccharides containing three or more (1-&gt;4)-alpha-linked D-glucose units.. With respect to regulation, strongly inhibited by Hg (2+). Inhibited by Zn (2+). Activated by Fe (2+), Mg (2+) and Ba (2+). Alpha-amylase active towards amylose, starch, amylopectin and maltodextrins. Has lower activity towards glycogen, and is not active towards alpha/beta-cyclodextrin. In Bacillus sp, this protein is Alpha-amylase.